A 186-amino-acid polypeptide reads, in one-letter code: MKLFVGLGNPGKEYEQTRHNIGFFVIDELAKRWNVSLKTAKFRGLFGTASVFGEKVALCKPLTYMNLSGECVCPLIDFYDIAVDDVIIIYDDLDLPPGKIRLRLKGGSGGHNGVKSIIHHLGTEQFKRIRIGIGRPTNGQPVADYVLSRFTEEEKPAVMEAVLRAADACEQAVTTPFIQVMNDFNE.

Tyrosine 14 provides a ligand contact to tRNA. Histidine 19 (proton acceptor) is an active-site residue. Residues tyrosine 64, asparagine 66, and asparagine 112 each coordinate tRNA.

The protein belongs to the PTH family. As to quaternary structure, monomer.

Its subcellular location is the cytoplasm. The enzyme catalyses an N-acyl-L-alpha-aminoacyl-tRNA + H2O = an N-acyl-L-amino acid + a tRNA + H(+). Functionally, hydrolyzes ribosome-free peptidyl-tRNAs (with 1 or more amino acids incorporated), which drop off the ribosome during protein synthesis, or as a result of ribosome stalling. In terms of biological role, catalyzes the release of premature peptidyl moieties from peptidyl-tRNA molecules trapped in stalled 50S ribosomal subunits, and thus maintains levels of free tRNAs and 50S ribosomes. This is Peptidyl-tRNA hydrolase from Geobacillus thermodenitrificans (strain NG80-2).